The sequence spans 203 residues: Recombination protein RecR (203 aa).

A C4-type zinc finger spans residues 57 to 72 (CARCNTFSETELCVLC). The region spanning 80–175 (DVLCVVEMPA…SVSRIARGLP (96 aa)) is the Toprim domain.

The protein belongs to the RecR family.

In terms of biological role, may play a role in DNA repair. It seems to be involved in an RecBC-independent recombinational process of DNA repair. It may act with RecF and RecO. The chain is Recombination protein RecR from Laribacter hongkongensis (strain HLHK9).